The primary structure comprises 214 residues: tRNA (guanine-N(7)-)-methyltransferase (214 aa).

Residues Glu44, Glu69, Asp96, and Asp118 each coordinate S-adenosyl-L-methionine. Residue Asp118 is part of the active site. Substrate is bound by residues Lys122, Asp154, and 191-194 (TEYE).

This sequence belongs to the class I-like SAM-binding methyltransferase superfamily. TrmB family.

It catalyses the reaction guanosine(46) in tRNA + S-adenosyl-L-methionine = N(7)-methylguanosine(46) in tRNA + S-adenosyl-L-homocysteine. The protein operates within tRNA modification; N(7)-methylguanine-tRNA biosynthesis. Functionally, catalyzes the formation of N(7)-methylguanine at position 46 (m7G46) in tRNA. In Listeria monocytogenes serotype 4b (strain F2365), this protein is tRNA (guanine-N(7)-)-methyltransferase.